The sequence spans 215 residues: Polysialic acid O-acetyltransferase (215 aa).

Acetyl-CoA is bound by residues 119 to 121, arginine 148, lysine 154, serine 166, 171 to 172, and lysine 190; these read DMH and YK.

This sequence belongs to the transferase hexapeptide repeat family. Homotrimer.

It carries out the reaction [(2-&gt;6)-alpha-D-glucosyl-(1-&gt;4)-N-acetyl-alpha-D-neuraminosyl](n) + n acetyl-CoA = [(2-&gt;6)-alpha-D-glucosyl-(1-&gt;4)-N,7-O-diacetyl-alpha-D-neuraminosyl](n) + n CoA. The enzyme catalyses [(2-&gt;6)-alpha-D-glucosyl-(1-&gt;4)-N-acetyl-alpha-D-neuraminosyl](n) + n acetyl-CoA = [(2-&gt;6)-alpha-D-glucosyl-(1-&gt;4)-N,O(9)-diacetyl-alpha-D-neuraminosyl](n) + n CoA. Functionally, catalyzes the O-acetylation of capsular polymeric sialic acid consisting of polymers of (2-&gt;6)-alpha-D-glucosyl-(1-&gt;4)-N-acetyl-alpha-D-neuraminosyl residues. Shows high substrate specificity toward polymers of sialic acid that contains a large number of residues. The polypeptide is Polysialic acid O-acetyltransferase (Neisseria meningitidis).